Reading from the N-terminus, the 271-residue chain is Proteasome inhibitor PI31 subunit (271 aa).

Ala2 bears the N-acetylalanine mark. An important for homodimerization and interaction with FBXO7 region spans residues 2-150 (AGLEVLFASA…PIHEQWEKVR (149 aa)). Residues Ser153 and Ser189 each carry the phosphoserine modification. At Arg205 the chain carries Omega-N-methylarginine. Arg219 is modified (asymmetric dimethylarginine). Residues 221-271 (LIDPSSGLPNRLPPGAVPPGARFDPFGPIGTSPSGPNPDHLPPPGYDDMYL) form a disordered region. An Omega-N-methylarginine modification is found at Arg231. Ser252 is modified (phosphoserine). Pro residues predominate over residues 255-265 (GPNPDHLPPPG).

The protein belongs to the proteasome inhibitor PI31 family. Monomer and homodimer. Interacts with FBXO7.

It localises to the cytoplasm. It is found in the endoplasmic reticulum. In terms of biological role, plays an important role in control of proteasome function. Inhibits the hydrolysis of protein and peptide substrates by the 20S proteasome. Also inhibits the activation of the proteasome by the proteasome regulatory proteins PA700 and PA28. In Rattus norvegicus (Rat), this protein is Proteasome inhibitor PI31 subunit (Psmf1).